We begin with the raw amino-acid sequence, 192 residues long: Segregation and condensation protein B (192 aa).

It belongs to the ScpB family. Homodimer. Homodimerization may be required to stabilize the binding of ScpA to the Smc head domains. Component of a cohesin-like complex composed of ScpA, ScpB and the Smc homodimer, in which ScpA and ScpB bind to the head domain of Smc. The presence of the three proteins is required for the association of the complex with DNA.

Its subcellular location is the cytoplasm. Participates in chromosomal partition during cell division. May act via the formation of a condensin-like complex containing Smc and ScpA that pull DNA away from mid-cell into both cell halves. The polypeptide is Segregation and condensation protein B (Mycoplasma mobile (strain ATCC 43663 / 163K / NCTC 11711) (Mesomycoplasma mobile)).